Reading from the N-terminus, the 289-residue chain is Glycine--tRNA ligase alpha subunit (289 aa).

It belongs to the class-II aminoacyl-tRNA synthetase family. In terms of assembly, tetramer of two alpha and two beta subunits.

It is found in the cytoplasm. The enzyme catalyses tRNA(Gly) + glycine + ATP = glycyl-tRNA(Gly) + AMP + diphosphate. The polypeptide is Glycine--tRNA ligase alpha subunit (Rickettsia typhi (strain ATCC VR-144 / Wilmington)).